Consider the following 235-residue polypeptide: Enolase-phosphatase E1 (235 aa).

This sequence belongs to the HAD-like hydrolase superfamily. MasA/MtnC family. In terms of assembly, monomer. Mg(2+) serves as cofactor.

It carries out the reaction 5-methylsulfanyl-2,3-dioxopentyl phosphate + H2O = 1,2-dihydroxy-5-(methylsulfanyl)pent-1-en-3-one + phosphate. It participates in amino-acid biosynthesis; L-methionine biosynthesis via salvage pathway; L-methionine from S-methyl-5-thio-alpha-D-ribose 1-phosphate: step 3/6. Its pathway is amino-acid biosynthesis; L-methionine biosynthesis via salvage pathway; L-methionine from S-methyl-5-thio-alpha-D-ribose 1-phosphate: step 4/6. In terms of biological role, bifunctional enzyme that catalyzes the enolization of 2,3-diketo-5-methylthiopentyl-1-phosphate (DK-MTP-1-P) into the intermediate 2-hydroxy-3-keto-5-methylthiopentenyl-1-phosphate (HK-MTPenyl-1-P), which is then dephosphorylated to form the acireductone 1,2-dihydroxy-3-keto-5-methylthiopentene (DHK-MTPene). This Gluconacetobacter diazotrophicus (strain ATCC 49037 / DSM 5601 / CCUG 37298 / CIP 103539 / LMG 7603 / PAl5) protein is Enolase-phosphatase E1.